A 331-amino-acid polypeptide reads, in one-letter code: Isopenicillin N synthase (331 aa).

The isopenicillin N site is built by arginine 87, tyrosine 91, serine 183, and tyrosine 189. N-[(5S)-5-amino-5-carboxypentanoyl]-L-cysteinyl-D-valine-binding residues include arginine 87, tyrosine 91, serine 183, tyrosine 189, histidine 214, and aspartate 216. The 113-residue stretch at 176-288 (KKEDALSSVV…RQSLPFFVNL (113 aa)) folds into the Fe2OG dioxygenase domain. Fe(2+) is bound by residues histidine 214, aspartate 216, and histidine 270. Position 279 (arginine 279) interacts with 2-oxoglutarate. Serine 281 serves as a coordination point for isopenicillin N. Serine 281 is a binding site for N-[(5S)-5-amino-5-carboxypentanoyl]-L-cysteinyl-D-valine.

The protein belongs to the iron/ascorbate-dependent oxidoreductase family. Monomer. Requires Fe(2+) as cofactor.

It localises to the cytoplasm. The protein localises to the cytosol. The catalysed reaction is N-[(5S)-5-amino-5-carboxypentanoyl]-L-cysteinyl-D-valine + O2 = isopenicillin N + 2 H2O. It participates in antibiotic biosynthesis; penicillin G biosynthesis; penicillin G from L-alpha-aminoadipate and L-cysteine and L-valine: step 2/3. Isopenicillin N synthase; part of the gene cluster that mediates the biosynthesis of penicillin, the world's most important antibiotic. IpnA catalyzes the cyclization of the tripeptide N-[(5S)-5-amino-5-carboxypentanoyl]-L-cysteinyl-D-valine (LLD-ACV or ACV) to form isopenicillin N (IPN) that contains the beta-lactam nucleus. The penicillin biosynthesis occurs via 3 enzymatic steps, the first corresponding to the production of the tripeptide N-[(5S)-5-amino-5-carboxypentanoyl]-L-cysteinyl-D-valine (LLD-ACV or ACV) by the NRPS acvA. The tripeptide ACV is then cyclized to isopenicillin N (IPN) by the isopenicillin N synthase ipnA that forms the beta-lactam nucleus. Finally, the alpha-aminoadipyl side chain is exchanged for phenylacetic acid by the isopenicillin N acyltransferase aatA to yield penicillin in the peroxisomal matrix. The sequence is that of Isopenicillin N synthase from Penicillium chrysogenum (Penicillium notatum).